The chain runs to 398 residues: MSVMGEDALVPRARSRLPVMCAAGLGFLTLAVAWLLDSDKFSERAGIIAFGLMLERFIYCICLLAEELLFHSRQRYHGRMSEIFRACFRGSGILGMCAIFLMLMLGGVSFSVKQWSHFNLMCAGYMLLNSLGVLGPAPVEISEICEAKKMNVAHGLAWSFYIGYLKFLLPALEVNVREYSRRERLSSPRLHILLPLNARVPSKPEEEDTNVVFHENLPDLKLDRAGVRKRSYTNSVYKITHNNETFSCILEYATPLLTLYQMSQESSAGFGERERKQQVLLFYRTLSQILDNSLECRNRYRLILLNDEHTGDPHYLSRELFQNLKQQDGEIFMDPTNEVHPVPEEGPVGNCNGALQATFHEEPMSDEPTLMFSRPQSLRSEPVETTDYFNPSSAMKQN.

Residues 1 to 16 (MSVMGEDALVPRARSR) lie on the Cytoplasmic side of the membrane. Residues 17-37 (LPVMCAAGLGFLTLAVAWLLD) traverse the membrane as a helical segment. The Lumenal portion of the chain corresponds to 38-44 (SDKFSER). Residues 45-65 (AGIIAFGLMLERFIYCICLLA) form a helical membrane-spanning segment. The Cytoplasmic segment spans residues 66-91 (EELLFHSRQRYHGRMSEIFRACFRGS). The chain crosses the membrane as a helical span at residues 92-112 (GILGMCAIFLMLMLGGVSFSV). Topologically, residues 113 to 120 (KQWSHFNL) are lumenal. Residues 121–141 (MCAGYMLLNSLGVLGPAPVEI) traverse the membrane as a helical segment. Residues 142 to 398 (SEICEAKKMN…FNPSSAMKQN (257 aa)) lie on the Cytoplasmic side of the membrane. The segment at 150–331 (MNVAHGLAWS…QNLKQQDGEI (182 aa)) is cyclic dinucleotide-binding domain (CBD). 2',3'-cGAMP is bound by residues serine 159, tyrosine 164, arginine 230, and threonine 254. Residues serine 159, tyrosine 164, 230–233 (RSYT), and threonine 254 contribute to the 3',3'-c-di-GMP site. A disordered region spans residues 375 to 398 (PQSLRSEPVETTDYFNPSSAMKQN). The segment covering 387–398 (DYFNPSSAMKQN) has biased composition (polar residues).

This sequence belongs to the STING family. Homodimer; forms a homodimer in absence of cyclic nucleotide (c-di-GMP or cGAMP). Homotetramer; in presence of cyclic nucleotide (c-di-GMP or cGAMP), forms tetramers and higher-order oligomers through side-by-side packing. Interacts (when phosphorylated) with irf3; following activation and phosphorylation by tbk1, recruits irf3. Post-translationally, phosphorylation by TBK1 leads to activation and production of IFN-beta. Following cyclic nucleotide (c-di-GMP or cGAMP)-binding, activation and translocation from the endoplasmic reticulum, STING1 is phosphorylated by tbk1, leading to recruitment of the transcription factor irf3 to induce type-I interferons and other cytokines.

It localises to the endoplasmic reticulum membrane. It is found in the cytoplasm. The protein resides in the perinuclear region. The protein localises to the endoplasmic reticulum-Golgi intermediate compartment membrane. Its subcellular location is the golgi apparatus membrane. It localises to the cytoplasmic vesicle. It is found in the autophagosome membrane. The enzyme catalyses H(+)(in) = H(+)(out). In terms of biological role, facilitator of innate immune signaling that acts as a sensor of cytosolic DNA from bacteria and viruses and promotes the production of type I interferon (IFN-alpha and IFN-beta). Innate immune response is triggered in response to non-CpG double-stranded DNA from viruses and bacteria delivered to the cytoplasm. Acts by binding cyclic dinucleotides: recognizes and binds cyclic di-GMP (c-di-GMP), a second messenger produced by bacteria, and cyclic GMP-AMP (cGAMP), a messenger produced by CGAS in response to DNA virus in the cytosol. Upon binding of c-di-GMP or cGAMP, STING1 oligomerizes and is able to activate both NF-kappa-B and irf3 transcription pathways to induce expression of type I interferon and exert a potent anti-viral state. Exhibits 2',3' phosphodiester linkage-specific ligand recognition: can bind both 2'-3' linked cGAMP and 3'-3' linked cGAMP but is preferentially activated by 2'-3' linked cGAMP. In addition to promote the production of type I interferons, plays a direct role in autophagy. Following cGAMP-binding, STING1 buds from the endoplasmic reticulum into COPII vesicles, which then form the endoplasmic reticulum-Golgi intermediate compartment (ERGIC). The ERGIC serves as the membrane source for LC3 lipidation, leading to formation of autophagosomes that target cytosolic DNA or DNA viruses for degradation by the lysosome. Promotes autophagy by acting as a proton channel that directs proton efflux from the Golgi to facilitate LC3 lipidation. The autophagy- and interferon-inducing activities can be uncoupled and autophagy induction is independent of TBK1 phosphorylation. This Danio rerio (Zebrafish) protein is Stimulator of interferon genes protein.